We begin with the raw amino-acid sequence, 387 residues long: Succinyl-diaminopimelate desuccinylase (387 aa).

Residue H75 coordinates Zn(2+). Residue D77 is part of the active site. D108 contributes to the Zn(2+) binding site. E139 serves as the catalytic Proton acceptor. Positions 140, 168, and 357 each coordinate Zn(2+).

Belongs to the peptidase M20A family. DapE subfamily. In terms of assembly, homodimer. It depends on Zn(2+) as a cofactor. Requires Co(2+) as cofactor.

It carries out the reaction N-succinyl-(2S,6S)-2,6-diaminopimelate + H2O = (2S,6S)-2,6-diaminopimelate + succinate. The protein operates within amino-acid biosynthesis; L-lysine biosynthesis via DAP pathway; LL-2,6-diaminopimelate from (S)-tetrahydrodipicolinate (succinylase route): step 3/3. Catalyzes the hydrolysis of N-succinyl-L,L-diaminopimelic acid (SDAP), forming succinate and LL-2,6-diaminopimelate (DAP), an intermediate involved in the bacterial biosynthesis of lysine and meso-diaminopimelic acid, an essential component of bacterial cell walls. This chain is Succinyl-diaminopimelate desuccinylase, found in Caulobacter sp. (strain K31).